The following is a 486-amino-acid chain: Hematopoietic lineage cell-specific protein (486 aa).

The segment at 27 to 66 (FVNDISEKEQRWGAKTIEGSGRTEHINIHQLRNKVSEEHD) is involved in HAX-1 binding. Lysine 41 carries the N6-acetyllysine modification. Cortactin repeat units lie at residues 79 to 115 (ASHG…SQTD), 116 to 152 (AARG…SQKD), and 153 to 189 (YSHG…SQRD). Lysine 123 is subject to N6-acetyllysine. At tyrosine 140 the chain carries Phosphotyrosine. The Cortactin 4; truncated repeat unit spans residues 190-212 (YAKGFGGQYGIQKDRVDKSAVGF). Lysine 192 is subject to N6-acetyllysine. Tyrosine 198 carries the post-translational modification Phosphotyrosine. Tyrosine 222 is subject to Phosphotyrosine; by FGR. The disordered stretch occupies residues 226–430 (TPIEAASSGA…AGPSAGAGGA (205 aa)). Composition is skewed to basic and acidic residues over residues 240-258 (AKFE…EEKA) and 265-276 (QQERKAVVKMSR). Position 241 is an N6-acetyllysine (lysine 241). Serine 275 carries the post-translational modification Phosphoserine. At threonine 330 the chain carries Phosphothreonine. Residue serine 333 is modified to Phosphoserine. A compositionally biased stretch (low complexity) spans 358-367 (VVEEPVYEAA). Residues 368-413 (PELEPEPEPDYEPEPETEPDYEDVGELDRQDEDAEGDYEDVLEPED) show a composition bias toward acidic residues. Phosphotyrosine; by SYK and FES is present on residues tyrosine 388 and tyrosine 405. The 58-residue stretch at 429–486 (GAGISAIALYDYQGEGSDELSFDPDDIITDIEMVDEGWWRGQCRGHFGLFPANYVKLL) folds into the SH3 domain.

In terms of assembly, interacts (via SH2 domain) with FGR. Associates with the SH2 and SH3 domains of LCK. Binding to he LCK SH3 domain occurs constitutively, while binding to the LCK SH2 domain occurs only upon TCR stimulation. A similar binding pattern was observed with LYN, but not with FYN in which the FYN SH2 region associates upon TCR stimulation but the FYN SH3 region does not associate regardless of TCR stimulation. Directly associates with HAX1, through binding to its C-terminal region. Interacts with HS1BP3. Interacts with FES/FPS. Forms a multiprotein complex with LYN and ANKRD54. Post-translationally, phosphorylated by LYN, FYN and FGR after cross-linking of surface IgM on B-cells. Phosphorylation by LYN, FYN and FGR requires prior phosphorylation by SYK. Binds to LCK in vivo, and is tyrosine phosphorylated upon TCR stimulation. Phosphorylated by FES. As to expression, expressed only in tissues and cells of hematopoietic origin.

The protein localises to the mitochondrion. Functionally, substrate of the antigen receptor-coupled tyrosine kinase. Plays a role in antigen receptor signaling for both clonal expansion and deletion in lymphoid cells. May also be involved in the regulation of gene expression. This is Hematopoietic lineage cell-specific protein (Hcls1) from Mus musculus (Mouse).